Consider the following 316-residue polypeptide: CD276 antigen (316 aa).

A signal peptide spans 1-28 (MLRGWGGPSVGVCVRTALGVLCLCLTGA). In terms of domain architecture, Ig-like V-type spans 29-139 (VEVQVSEDPV…DSAAVSLQVA (111 aa)). Residues 29–248 (VEVQVSEDPV…GQPLTFPPEA (220 aa)) lie on the Extracellular side of the membrane. N-linked (GlcNAc...) asparagine glycans are attached at residues Asn104, Asn189, and Asn215. In terms of domain architecture, Ig-like C2-type spans 145–238 (PSMTLEPNKD…QDAHGSVTIT (94 aa)). Cys165 and Cys220 are oxidised to a cystine. A helical membrane pass occupies residues 249–269 (LWVTVGLSVCLVVLLVALAFV). Residues 270-316 (CWRKIKQSCEEENAGAEDQDGDGEGSKTALRPLKPSENKEDDGQEIA) lie on the Cytoplasmic side of the membrane. Acidic residues predominate over residues 280 to 292 (EENAGAEDQDGDG). Residues 280–316 (EENAGAEDQDGDGEGSKTALRPLKPSENKEDDGQEIA) form a disordered region.

Belongs to the immunoglobulin superfamily. BTN/MOG family. As to quaternary structure, interacts with TREML2 and this interaction enhances T-cell activation. In terms of tissue distribution, ubiquitous.

It is found in the membrane. Functionally, modulates T-cell-mediated immune responses and the development of acute and chronic transplant rejection. Plays a positive regulatory role in bone formation and has a dual role in the bone-immune interface. Induces antitumor immunity as it activates both acquired and innate immunity leading to natural killer cell and CD8 T-cell dependent killing of tumor cells. This Mus musculus (Mouse) protein is CD276 antigen (Cd276).